The chain runs to 326 residues: UDP-3-O-acylglucosamine N-acyltransferase (326 aa).

Histidine 225 serves as the catalytic Proton acceptor.

This sequence belongs to the transferase hexapeptide repeat family. LpxD subfamily. In terms of assembly, homotrimer.

The enzyme catalyses a UDP-3-O-[(3R)-3-hydroxyacyl]-alpha-D-glucosamine + a (3R)-hydroxyacyl-[ACP] = a UDP-2-N,3-O-bis[(3R)-3-hydroxyacyl]-alpha-D-glucosamine + holo-[ACP] + H(+). It participates in bacterial outer membrane biogenesis; LPS lipid A biosynthesis. Functionally, catalyzes the N-acylation of UDP-3-O-acylglucosamine using 3-hydroxyacyl-ACP as the acyl donor. Is involved in the biosynthesis of lipid A, a phosphorylated glycolipid that anchors the lipopolysaccharide to the outer membrane of the cell. The chain is UDP-3-O-acylglucosamine N-acyltransferase from Verminephrobacter eiseniae (strain EF01-2).